A 994-amino-acid polypeptide reads, in one-letter code: Phosphoenolpyruvate carboxylase (994 aa).

The interval 1 to 67 is disordered; sequence MKAVRSDKTT…GRTREDKDHP (67 aa). Low complexity-rich tracts occupy residues 9–24 and 34–57; these read TTQA…PAKA and AAPQ…PKAN. Active-site residues include His204 and Lys646.

This sequence belongs to the PEPCase type 1 family. Requires Mg(2+) as cofactor.

It carries out the reaction oxaloacetate + phosphate = phosphoenolpyruvate + hydrogencarbonate. Its function is as follows. Forms oxaloacetate, a four-carbon dicarboxylic acid source for the tricarboxylic acid cycle. This Paraburkholderia xenovorans (strain LB400) protein is Phosphoenolpyruvate carboxylase.